The chain runs to 355 residues: 3-isopropylmalate dehydrogenase (355 aa).

Positions 90, 100, 128, and 222 each coordinate substrate. Aspartate 222, aspartate 246, and aspartate 250 together coordinate Mg(2+). 280–292 provides a ligand contact to NAD(+); the sequence is GSAPDIAGKGIAN.

This sequence belongs to the isocitrate and isopropylmalate dehydrogenases family. LeuB type 1 subfamily. As to quaternary structure, homodimer. Mg(2+) is required as a cofactor. It depends on Mn(2+) as a cofactor.

Its subcellular location is the cytoplasm. It catalyses the reaction (2R,3S)-3-isopropylmalate + NAD(+) = 4-methyl-2-oxopentanoate + CO2 + NADH. It functions in the pathway amino-acid biosynthesis; L-leucine biosynthesis; L-leucine from 3-methyl-2-oxobutanoate: step 3/4. Functionally, catalyzes the oxidation of 3-carboxy-2-hydroxy-4-methylpentanoate (3-isopropylmalate) to 3-carboxy-4-methyl-2-oxopentanoate. The product decarboxylates to 4-methyl-2 oxopentanoate. This Burkholderia multivorans (strain ATCC 17616 / 249) protein is 3-isopropylmalate dehydrogenase.